The primary structure comprises 97 residues: Large ribosomal subunit protein bL31 (97 aa).

The interval 75-97 (NKTKKSNQAKVEKQTRHRSINEL) is disordered. Over residues 84–97 (KVEKQTRHRSINEL) the composition is skewed to basic and acidic residues.

This sequence belongs to the bacterial ribosomal protein bL31 family. Type A subfamily. Part of the 50S ribosomal subunit.

In terms of biological role, binds the 23S rRNA. This is Large ribosomal subunit protein bL31 from Mycoplasma genitalium (strain ATCC 33530 / DSM 19775 / NCTC 10195 / G37) (Mycoplasmoides genitalium).